Here is a 455-residue protein sequence, read N- to C-terminus: Probable glycine dehydrogenase (decarboxylating) subunit 1 (455 aa).

It belongs to the GcvP family. N-terminal subunit subfamily. As to quaternary structure, the glycine cleavage system is composed of four proteins: P, T, L and H. In this organism, the P 'protein' is a heterodimer of two subunits.

The enzyme catalyses N(6)-[(R)-lipoyl]-L-lysyl-[glycine-cleavage complex H protein] + glycine + H(+) = N(6)-[(R)-S(8)-aminomethyldihydrolipoyl]-L-lysyl-[glycine-cleavage complex H protein] + CO2. In terms of biological role, the glycine cleavage system catalyzes the degradation of glycine. The P protein binds the alpha-amino group of glycine through its pyridoxal phosphate cofactor; CO(2) is released and the remaining methylamine moiety is then transferred to the lipoamide cofactor of the H protein. This chain is Probable glycine dehydrogenase (decarboxylating) subunit 1, found in Saccharolobus islandicus (strain Y.N.15.51 / Yellowstone #2) (Sulfolobus islandicus).